The following is a 684-amino-acid chain: Chaperone protein HtpG (684 aa).

The interval 1 to 329 (MSKKGTIGVT…SPDIPLNVSR (329 aa)) is a; substrate-binding. The segment at 330–548 (SYLQSDANVK…FMRRMRDMAQ (219 aa)) is b. Residues 549–684 (LQPGMSFYGE…EFIRRSQRLL (136 aa)) form a c region.

Belongs to the heat shock protein 90 family. As to quaternary structure, homodimer.

It localises to the cytoplasm. Its function is as follows. Molecular chaperone. Has ATPase activity. This chain is Chaperone protein HtpG, found in Porphyromonas gingivalis (strain ATCC BAA-308 / W83).